A 602-amino-acid polypeptide reads, in one-letter code: Raftlin (602 aa).

Gly-2 carries the N-myristoyl glycine lipid modification. A lipid anchor (S-palmitoyl cysteine) is attached at Cys-3. The span at 178–195 (TPASNNSVQSRDNKNVSN) shows a compositional bias: polar residues. 3 disordered regions span residues 178–282 (TPAS…RCSK), 451–495 (KKES…EVTE), and 524–567 (NETA…QSAP). Composition is skewed to basic and acidic residues over residues 197-209 (PEDH…EKID) and 244-265 (PDCK…REAP). Basic residues predominate over residues 468–477 (KPMKKSRKTK).

Belongs to the raftlin family.

It is found in the cell membrane. In terms of biological role, may play a pivotal role in the formation and/or maintenance of lipid rafts. May regulate B-cell antigen receptor-mediated signaling. This chain is Raftlin (RFTN1), found in Gallus gallus (Chicken).